The primary structure comprises 234 residues: GTP-binding protein YPT52 (234 aa).

Residues glycine 10–serine 17, aspartate 66–glutamine 70, and asparagine 111–glycine 114 each bind GTP. Disordered stretches follow at residues glutamine 131 to lysine 151 and asparagine 206 to serine 234. Residues glutamate 132–serine 142 are compositionally biased toward polar residues. A phosphoserine mark is found at serine 139 and serine 142. Lysine 151 participates in a covalent cross-link: Glycyl lysine isopeptide (Lys-Gly) (interchain with G-Cter in ubiquitin). Residues valine 217–serine 234 show a composition bias toward polar residues. S-geranylgeranyl cysteine attachment occurs at residues cysteine 232 and cysteine 233.

It belongs to the small GTPase superfamily. Rab family. As to quaternary structure, interacts with ROY1, YIF1, YIP3, YIP4 and YIP5.

The protein resides in the cell membrane. Its subcellular location is the endoplasmic reticulum. Required for transport in the endocytic pathway and for correct sorting of the vacuolar hydrolases suggesting a possible intersection of the endocytic with the vacuolar sorting pathway. May be involved in recruiting the MON1-CCZ1 complex to membranes enriched in phosphatidylinositol 3-phosphate (PtdIns[3]P) or other charged lipids, leading to recruitment of YPT7. In Saccharomyces cerevisiae (strain ATCC 204508 / S288c) (Baker's yeast), this protein is GTP-binding protein YPT52 (YPT52).